The following is an 89-amino-acid chain: Small ribosomal subunit protein uS15 (89 aa).

The protein belongs to the universal ribosomal protein uS15 family. In terms of assembly, part of the 30S ribosomal subunit. Forms a bridge to the 50S subunit in the 70S ribosome, contacting the 23S rRNA.

In terms of biological role, one of the primary rRNA binding proteins, it binds directly to 16S rRNA where it helps nucleate assembly of the platform of the 30S subunit by binding and bridging several RNA helices of the 16S rRNA. Functionally, forms an intersubunit bridge (bridge B4) with the 23S rRNA of the 50S subunit in the ribosome. The sequence is that of Small ribosomal subunit protein uS15 from Laribacter hongkongensis (strain HLHK9).